A 137-amino-acid polypeptide reads, in one-letter code: 15 kDa protein A (137 aa).

Residues 1–20 (MAGVWKVLVVLVGLAVVACA) form the signal peptide. 2 cysteine pairs are disulfide-bonded: Cys-77–Cys-88 and Cys-99–Cys-116.

The protein belongs to the cathelicidin family. Large granules of neutrophils.

The protein resides in the secreted. Binds to bacterial lipopolysaccharides (LPS), potentiates strongly the early antibacterial effects of BPI. Inhibits the late lethal action of BPI. The protein is 15 kDa protein A of Oryctolagus cuniculus (Rabbit).